The following is a 325-amino-acid chain: Secreted RxLR effector protein RXLR-C07 (325 aa).

The first 19 residues, 1–19 (MQGVRITILWCIVLATIYA), serve as a signal peptide directing secretion. TPR repeat units lie at residues 37–75 (RGLR…GEER), 92–125 (AQIL…IEKI), 134–167 (GLSL…VKKG), 218–251 (AELY…FLQR), and 260–293 (AFSL…AVSI). Residues 37 to 75 (RGLRNAGMKANDERMFKDAIEKLRHAISLLHNRVFGEER) carry the RxLR-dEER motif.

It belongs to the RxLR effector family.

Its subcellular location is the secreted. It is found in the host cytoplasm. It localises to the host nucleus. The protein localises to the host nucleolus. Secreted effector that suppresses pattern-triggered immunity (PTI) in plant host. This chain is Secreted RxLR effector protein RXLR-C07, found in Plasmopara halstedii (Downy mildew of sunflower).